We begin with the raw amino-acid sequence, 188 residues long: Succinate dehydrogenase [ubiquinone] cytochrome b large subunit, mitochondrial (188 aa).

The transit peptide at 1–31 directs the protein to the mitochondrion; sequence MSLLPYNATLCRVLRHNVKFIRSVQTSAARV. Topologically, residues 32-69 are mitochondrial matrix; the sequence is SAEKTPIQVWGWDYLMRQRALKRPIAPHLTIYKPQMTW. A helical transmembrane segment spans residues 70–95; sequence MVSGLHRVTGCAMAGTLLIGGVGFSV. Ser72 and Arg76 together coordinate a rhodoquinol. The a ubiquinone site is built by Ser72 and Arg76. Over 96–113 the chain is Mitochondrial intermembrane; it reads LPLDFTTFVEFIRGLGIP. Residues 114–140 form a helical membrane-spanning segment; the sequence is WVILDTFKFIIAFPIAFHTLNGIRFIG. Residue His131 participates in heme b binding. Residues 141 to 153 are Mitochondrial matrix-facing; the sequence is FDMAKGTDIPSIY. Residues 154–176 traverse the membrane as a helical segment; the sequence is RGAYLVLGLAALISLAVVVYPRW. The Mitochondrial intermembrane segment spans residues 177-188; that stretch reads ERHKKATLPTNH.

The protein belongs to the cytochrome b558 family. Component of the mitochondrial electron transport chain complex II composed of four subunits: a flavoprotein (Fp), an iron-sulfur protein (Ip), and a large cytochrome b (CybL) subunit and a small cytochrome b (CybS) subunit. There are 2 developmental stage-specific forms of complex II which have the Ip and CybL subunits in common. Complex II from the free-living larvae (aerobic environment) acts as a succinate dehydrogenase and is composed of the common subunit Ip and CybL and the stage specific subunits FpL and CybSL. Complex II from parasitic larvae and adults (anaerobic environment) acts as a fumarate reductase and is composed of the common subunit Ip and CybL and the stage specific subunits FpA and CybSA. Heme b is required as a cofactor. As to expression, expressed in adult muscles (at protein level).

It localises to the mitochondrion inner membrane. The protein operates within carbohydrate metabolism; tricarboxylic acid cycle; fumarate from succinate (eukaryal route): step 1/1. Its function is as follows. Membrane-bound large subunit (CybL) of the mitochondrial electron transport chain complex II, which together with the membrane-bound small subunit (CybS), anchor the catalytic subunits to the inner mitochondria membrane. During the free-living egg-larvae stages, which occur in an aerobic environment, complex II acts as a succinate dehydrogenase by transferring electrons from succinate to ubiquinone. During the parasitic larvae and adult stages, which occur in an anaerobic environment, complex II acts as a fumarate reductase by transferring electrons from rhodoquinol to fumarate. In Ascaris suum (Pig roundworm), this protein is Succinate dehydrogenase [ubiquinone] cytochrome b large subunit, mitochondrial.